A 165-amino-acid chain; its full sequence is Cyclic pyranopterin monophosphate synthase (165 aa).

Substrate is bound by residues 83-85 (FCH) and 120-121 (ME). D135 is a catalytic residue.

The protein belongs to the MoaC family. As to quaternary structure, homohexamer; trimer of dimers.

The enzyme catalyses (8S)-3',8-cyclo-7,8-dihydroguanosine 5'-triphosphate = cyclic pyranopterin phosphate + diphosphate. It functions in the pathway cofactor biosynthesis; molybdopterin biosynthesis. In terms of biological role, catalyzes the conversion of (8S)-3',8-cyclo-7,8-dihydroguanosine 5'-triphosphate to cyclic pyranopterin monophosphate (cPMP). The chain is Cyclic pyranopterin monophosphate synthase from Xanthomonas campestris pv. campestris (strain B100).